Consider the following 231-residue polypeptide: Phosphatidylserine decarboxylase proenzyme (231 aa).

Ser188 acts as the Schiff-base intermediate with substrate; via pyruvic acid in catalysis. Position 188 is a pyruvic acid (Ser); by autocatalysis (Ser188).

Belongs to the phosphatidylserine decarboxylase family. PSD-A subfamily. In terms of assembly, heterodimer of a large membrane-associated beta subunit and a small pyruvoyl-containing alpha subunit. It depends on pyruvate as a cofactor. Post-translationally, is synthesized initially as an inactive proenzyme. Formation of the active enzyme involves a self-maturation process in which the active site pyruvoyl group is generated from an internal serine residue via an autocatalytic post-translational modification. Two non-identical subunits are generated from the proenzyme in this reaction, and the pyruvate is formed at the N-terminus of the alpha chain, which is derived from the carboxyl end of the proenzyme. The post-translation cleavage follows an unusual pathway, termed non-hydrolytic serinolysis, in which the side chain hydroxyl group of the serine supplies its oxygen atom to form the C-terminus of the beta chain, while the remainder of the serine residue undergoes an oxidative deamination to produce ammonia and the pyruvoyl prosthetic group on the alpha chain.

It localises to the cell membrane. The catalysed reaction is a 1,2-diacyl-sn-glycero-3-phospho-L-serine + H(+) = a 1,2-diacyl-sn-glycero-3-phosphoethanolamine + CO2. It functions in the pathway phospholipid metabolism; phosphatidylethanolamine biosynthesis; phosphatidylethanolamine from CDP-diacylglycerol: step 2/2. Catalyzes the formation of phosphatidylethanolamine (PtdEtn) from phosphatidylserine (PtdSer). This chain is Phosphatidylserine decarboxylase proenzyme, found in Rickettsia peacockii (strain Rustic).